A 347-amino-acid chain; its full sequence is UDP-3-O-acylglucosamine N-acyltransferase (347 aa).

His248 functions as the Proton acceptor in the catalytic mechanism.

The protein belongs to the transferase hexapeptide repeat family. LpxD subfamily. Homotrimer.

It catalyses the reaction a UDP-3-O-[(3R)-3-hydroxyacyl]-alpha-D-glucosamine + a (3R)-hydroxyacyl-[ACP] = a UDP-2-N,3-O-bis[(3R)-3-hydroxyacyl]-alpha-D-glucosamine + holo-[ACP] + H(+). The protein operates within bacterial outer membrane biogenesis; LPS lipid A biosynthesis. Catalyzes the N-acylation of UDP-3-O-acylglucosamine using 3-hydroxyacyl-ACP as the acyl donor. Is involved in the biosynthesis of lipid A, a phosphorylated glycolipid that anchors the lipopolysaccharide to the outer membrane of the cell. The polypeptide is UDP-3-O-acylglucosamine N-acyltransferase (Synechococcus sp. (strain CC9902)).